Consider the following 249-residue polypeptide: MVAFDANEILTPFCEGHREGAILFDCQRMRQVEYGLFVPAWWGERAHPISEGGRGSAWFVEASFGNAVLRQYRRGGMIAMLNRDRYFWCGGHRTRSVLEFRLMRELISRGLPVPTPLAACYVRHGVQYRAAILMERLEGVSSLAMCVRGNSKEIHWEQIGRMISRFHREGLDHADLNAHNILLDQAGQCWLIDFDRGALRIPATKWREHNLARLLRSLLKIRGERSVDAVYRDFERLCRAYDLAWGRGC.

Asp-175 is an active-site residue.

This sequence belongs to the protein kinase superfamily. KdkA/RfaP family.

The protein localises to the cell inner membrane. The catalysed reaction is an alpha-Kdo-(2-&gt;6)-lipid IVA + ATP = a 4-O-phospho-alpha-Kdo-(2-&gt;6)-lipid IVA + ADP + H(+). The protein operates within bacterial outer membrane biogenesis; LPS core biosynthesis. In terms of biological role, catalyzes the ATP-dependent phosphorylation of the 3-deoxy-D-manno-octulosonic acid (Kdo) residue in Kdo-lipid IV(A) at the 4-OH position. The protein is 3-deoxy-D-manno-octulosonic acid kinase of Xylella fastidiosa (strain M23).